Consider the following 305-residue polypeptide: Auxin-responsive protein IAA27 (305 aa).

The EAR-like (transcriptional repression) signature appears at 45 to 49 (LRLGL). Disordered stretches follow at residues 96–119 (TTATGDVGSGSGPRTSVVKDGKST) and 155–180 (KNSMASSQSQKPGNNSETEEAEAKSG). Polar residues predominate over residues 155-170 (KNSMASSQSQKPGNNS). A PB1 domain is found at 185–287 (CLYVKVSMEG…SCKKLRIMKS (103 aa)).

It belongs to the Aux/IAA family. In terms of assembly, homodimers and heterodimers. Interacts with phytochrome A. Interacts with TPL.

It localises to the nucleus. Functionally, aux/IAA proteins are short-lived transcriptional factors that function as repressors of early auxin response genes at low auxin concentrations. Repression is thought to result from the interaction with auxin response factors (ARFs), proteins that bind to the auxin-responsive promoter element (AuxRE). Formation of heterodimers with ARF proteins may alter their ability to modulate early auxin response genes expression. The polypeptide is Auxin-responsive protein IAA27 (IAA27) (Arabidopsis thaliana (Mouse-ear cress)).